Here is a 558-residue protein sequence, read N- to C-terminus: N-terminal histidine N-methyltransferase (558 aa).

Topologically, residues 1–15 (MAPFRSIYEKDATKK) are cytoplasmic. The helical transmembrane segment at 16–32 (LVVGAALLVLAAFYSYV) threads the bilayer. The Lumenal portion of the chain corresponds to 33–49 (FLLTLAPVYGSTPSHIF). A helical membrane pass occupies residues 50-65 (HGYGVGIAGVAGWFSK). Residues 66 to 77 (DIVDRVSGRKAI) are Cytoplasmic-facing. A helical membrane pass occupies residues 78–96 (YAIPVLAFFLPVVQYFVSQ). Residues 97–104 (QSSALGNP) lie on the Lumenal side of the membrane. A helical transmembrane segment spans residues 105–131 (AGPIFTEVLALYPLVLLSVACAGKLVQ). The Cytoplasmic segment spans residues 132 to 145 (AGLNLQRHGDLVAE). Residues 146-169 (HIPLLGSYVIYSAGEHLIKAFLSR) traverse the membrane as a helical segment. At 170-172 (FIG) the chain is on the lumenal side. The chain crosses the membrane as a helical span at residues 173-194 (STVLLSRAGLQILIAIFYAAAV). Over 195 to 197 (PSK) the chain is Cytoplasmic. The chain crosses the membrane as a helical span at residues 198 to 215 (ALLLAIPAFLFSVTSNTH). Residues 216–558 (LPLGHTTTAL…VLPDRVWEGW (343 aa)) lie on the Lumenal side of the membrane.

This sequence belongs to the methyltransferase superfamily.

Its subcellular location is the endoplasmic reticulum membrane. It carries out the reaction L-histidyl-[protein] + S-adenosyl-L-methionine = N(tele)-methyl-L-histidyl-[protein] + S-adenosyl-L-homocysteine + H(+). Functionally, protein-histidine N-methyltransferase that specifically mediates 3-methylhistidine (tele-methylhistidine) methylation at 'His-1', which protects the side-chain from oxidative damage. Methylates lytic polysaccharide monooxygenases (LPMOs) destined for secretion, including AN4702. This is N-terminal histidine N-methyltransferase from Emericella nidulans (strain FGSC A4 / ATCC 38163 / CBS 112.46 / NRRL 194 / M139) (Aspergillus nidulans).